The sequence spans 20 residues: Brevinin-1SPb (20 aa).

Cys14 and Cys20 are oxidised to a cystine.

Expressed by the skin glands.

Its subcellular location is the secreted. In terms of biological role, antimicrobial peptide with activity against Gram-negative and Gram-positive bacteria (MIC=50 uM against E.coli, MIC=6 uM against S.aureus) and fungi (MIC=13 uM against C.albicans). Shows hemolytic activity on human erythrocytes (HC(50)=25 uM). The chain is Brevinin-1SPb from Lithobates septentrionalis (Mink frog).